The primary structure comprises 119 residues: MARVKRAVNARKNHRKVLKLAKGYYGGKSKLFKTANESVIRALRNAYVGRRLRKRDFRKLWIARINAATRINGLSYSKFINGIKLAGIDMNRKMLSEIAINDPKAFSELVEVAKKQINA.

This sequence belongs to the bacterial ribosomal protein bL20 family.

Functionally, binds directly to 23S ribosomal RNA and is necessary for the in vitro assembly process of the 50S ribosomal subunit. It is not involved in the protein synthesizing functions of that subunit. The protein is Large ribosomal subunit protein bL20 of Clostridium acetobutylicum (strain ATCC 824 / DSM 792 / JCM 1419 / IAM 19013 / LMG 5710 / NBRC 13948 / NRRL B-527 / VKM B-1787 / 2291 / W).